A 569-amino-acid polypeptide reads, in one-letter code: Sulfite reductase [NADPH] hemoprotein beta-component (569 aa).

Residues Cys434, Cys440, Cys479, and Cys483 each contribute to the [4Fe-4S] cluster site. A siroheme-binding site is contributed by Cys483.

It belongs to the nitrite and sulfite reductase 4Fe-4S domain family. As to quaternary structure, alpha(8)-beta(8). The alpha component is a flavoprotein, the beta component is a hemoprotein. Siroheme is required as a cofactor. It depends on [4Fe-4S] cluster as a cofactor.

It carries out the reaction hydrogen sulfide + 3 NADP(+) + 3 H2O = sulfite + 3 NADPH + 4 H(+). The protein operates within sulfur metabolism; hydrogen sulfide biosynthesis; hydrogen sulfide from sulfite (NADPH route): step 1/1. Component of the sulfite reductase complex that catalyzes the 6-electron reduction of sulfite to sulfide. This is one of several activities required for the biosynthesis of L-cysteine from sulfate. This chain is Sulfite reductase [NADPH] hemoprotein beta-component, found in Staphylococcus saprophyticus subsp. saprophyticus (strain ATCC 15305 / DSM 20229 / NCIMB 8711 / NCTC 7292 / S-41).